The sequence spans 229 residues: Enolase-phosphatase E1 (229 aa).

A disordered region spans residues 207 to 229 (RDPASHHPQVQRFDDIHPEQIPA). Over residues 218-229 (RFDDIHPEQIPA) the composition is skewed to basic and acidic residues.

It belongs to the HAD-like hydrolase superfamily. MasA/MtnC family. As to quaternary structure, monomer. It depends on Mg(2+) as a cofactor.

The enzyme catalyses 5-methylsulfanyl-2,3-dioxopentyl phosphate + H2O = 1,2-dihydroxy-5-(methylsulfanyl)pent-1-en-3-one + phosphate. The protein operates within amino-acid biosynthesis; L-methionine biosynthesis via salvage pathway; L-methionine from S-methyl-5-thio-alpha-D-ribose 1-phosphate: step 3/6. Its pathway is amino-acid biosynthesis; L-methionine biosynthesis via salvage pathway; L-methionine from S-methyl-5-thio-alpha-D-ribose 1-phosphate: step 4/6. In terms of biological role, bifunctional enzyme that catalyzes the enolization of 2,3-diketo-5-methylthiopentyl-1-phosphate (DK-MTP-1-P) into the intermediate 2-hydroxy-3-keto-5-methylthiopentenyl-1-phosphate (HK-MTPenyl-1-P), which is then dephosphorylated to form the acireductone 1,2-dihydroxy-3-keto-5-methylthiopentene (DHK-MTPene). The protein is Enolase-phosphatase E1 of Klebsiella pneumoniae subsp. pneumoniae (strain ATCC 700721 / MGH 78578).